A 236-amino-acid polypeptide reads, in one-letter code: 1-(5-phosphoribosyl)-5-[(5-phosphoribosylamino)methylideneamino] imidazole-4-carboxamide isomerase (236 aa).

Asp8 acts as the Proton acceptor in catalysis. The active-site Proton donor is the Asp127.

Belongs to the HisA/HisF family.

Its subcellular location is the cytoplasm. The enzyme catalyses 1-(5-phospho-beta-D-ribosyl)-5-[(5-phospho-beta-D-ribosylamino)methylideneamino]imidazole-4-carboxamide = 5-[(5-phospho-1-deoxy-D-ribulos-1-ylimino)methylamino]-1-(5-phospho-beta-D-ribosyl)imidazole-4-carboxamide. The protein operates within amino-acid biosynthesis; L-histidine biosynthesis; L-histidine from 5-phospho-alpha-D-ribose 1-diphosphate: step 4/9. The chain is 1-(5-phosphoribosyl)-5-[(5-phosphoribosylamino)methylideneamino] imidazole-4-carboxamide isomerase from Campylobacter concisus (strain 13826).